The primary structure comprises 117 residues: Holo-[acyl-carrier-protein] synthase (117 aa).

Mg(2+) contacts are provided by Asp-8 and Glu-58.

Belongs to the P-Pant transferase superfamily. AcpS family. It depends on Mg(2+) as a cofactor.

Its subcellular location is the cytoplasm. It catalyses the reaction apo-[ACP] + CoA = holo-[ACP] + adenosine 3',5'-bisphosphate + H(+). Transfers the 4'-phosphopantetheine moiety from coenzyme A to a Ser of acyl-carrier-protein. The sequence is that of Holo-[acyl-carrier-protein] synthase from Enterococcus faecalis (strain ATCC 700802 / V583).